Here is a 447-residue protein sequence, read N- to C-terminus: N-succinylarginine dihydrolase (447 aa).

Substrate-binding positions include 19-28 (AGLSFGNEAS), Asn-110, and 137-138 (HR). Residue Glu-174 is part of the active site. Arg-214 contacts substrate. His-250 is a catalytic residue. Substrate is bound by residues Asp-252 and Asn-365. The active-site Nucleophile is Cys-371.

The protein belongs to the succinylarginine dihydrolase family. As to quaternary structure, homodimer.

It catalyses the reaction N(2)-succinyl-L-arginine + 2 H2O + 2 H(+) = N(2)-succinyl-L-ornithine + 2 NH4(+) + CO2. It participates in amino-acid degradation; L-arginine degradation via AST pathway; L-glutamate and succinate from L-arginine: step 2/5. Catalyzes the hydrolysis of N(2)-succinylarginine into N(2)-succinylornithine, ammonia and CO(2). In Acinetobacter baumannii (strain ACICU), this protein is N-succinylarginine dihydrolase.